A 434-amino-acid chain; its full sequence is 23S rRNA (uracil(1939)-C(5))-methyltransferase RlmD (434 aa).

Residues 10–68 (RVTTRQIITVTVNDLDPFGQGVARHQGKALFVSGVLPQEQAEVVLVEDKKQYARAQVKR) enclose the TRAM domain. [4Fe-4S] cluster contacts are provided by cysteine 81, cysteine 87, cysteine 90, and cysteine 162. 6 residues coordinate S-adenosyl-L-methionine: glutamine 265, phenylalanine 294, asparagine 299, glutamate 315, asparagine 342, and aspartate 363. The active-site Nucleophile is the cysteine 389.

This sequence belongs to the class I-like SAM-binding methyltransferase superfamily. RNA M5U methyltransferase family. RlmD subfamily.

It catalyses the reaction uridine(1939) in 23S rRNA + S-adenosyl-L-methionine = 5-methyluridine(1939) in 23S rRNA + S-adenosyl-L-homocysteine + H(+). Functionally, catalyzes the formation of 5-methyl-uridine at position 1939 (m5U1939) in 23S rRNA. The sequence is that of 23S rRNA (uracil(1939)-C(5))-methyltransferase RlmD from Klebsiella pneumoniae (strain 342).